The sequence spans 185 residues: Peptidyl-tRNA hydrolase (185 aa).

Y14 serves as a coordination point for tRNA. Residue H19 is the Proton acceptor of the active site. Positions 65, 67, and 113 each coordinate tRNA.

The protein belongs to the PTH family. As to quaternary structure, monomer.

The protein localises to the cytoplasm. The enzyme catalyses an N-acyl-L-alpha-aminoacyl-tRNA + H2O = an N-acyl-L-amino acid + a tRNA + H(+). Hydrolyzes ribosome-free peptidyl-tRNAs (with 1 or more amino acids incorporated), which drop off the ribosome during protein synthesis, or as a result of ribosome stalling. In terms of biological role, catalyzes the release of premature peptidyl moieties from peptidyl-tRNA molecules trapped in stalled 50S ribosomal subunits, and thus maintains levels of free tRNAs and 50S ribosomes. In Rickettsia conorii (strain ATCC VR-613 / Malish 7), this protein is Peptidyl-tRNA hydrolase.